The chain runs to 448 residues: tRNA modification GTPase MnmE (448 aa).

(6S)-5-formyl-5,6,7,8-tetrahydrofolate-binding residues include R24, E81, and K120. The TrmE-type G domain maps to 216–373 (GLNVVLVGAP…LKRTLLREAG (158 aa)). N226 serves as a coordination point for K(+). Residues 226-231 (NVGKSS), 245-251 (TDIAGTT), and 270-273 (DTAG) contribute to the GTP site. S230 contacts Mg(2+). Residues T245, I247, and T250 each coordinate K(+). T251 serves as a coordination point for Mg(2+). K448 is a (6S)-5-formyl-5,6,7,8-tetrahydrofolate binding site.

It belongs to the TRAFAC class TrmE-Era-EngA-EngB-Septin-like GTPase superfamily. TrmE GTPase family. In terms of assembly, homodimer. Heterotetramer of two MnmE and two MnmG subunits. K(+) serves as cofactor.

It localises to the cytoplasm. Its function is as follows. Exhibits a very high intrinsic GTPase hydrolysis rate. Involved in the addition of a carboxymethylaminomethyl (cmnm) group at the wobble position (U34) of certain tRNAs, forming tRNA-cmnm(5)s(2)U34. The polypeptide is tRNA modification GTPase MnmE (Neisseria meningitidis serogroup A / serotype 4A (strain DSM 15465 / Z2491)).